Consider the following 101-residue polypeptide: Urease subunit beta (101 aa).

Belongs to the urease beta subunit family. As to quaternary structure, heterotrimer of UreA (gamma), UreB (beta) and UreC (alpha) subunits. Three heterotrimers associate to form the active enzyme.

It is found in the cytoplasm. It catalyses the reaction urea + 2 H2O + H(+) = hydrogencarbonate + 2 NH4(+). It participates in nitrogen metabolism; urea degradation; CO(2) and NH(3) from urea (urease route): step 1/1. The sequence is that of Urease subunit beta from Hahella chejuensis (strain KCTC 2396).